Reading from the N-terminus, the 177-residue chain is Large ribosomal subunit protein uL6 (177 aa).

The protein belongs to the universal ribosomal protein uL6 family. In terms of assembly, part of the 50S ribosomal subunit.

This protein binds to the 23S rRNA, and is important in its secondary structure. It is located near the subunit interface in the base of the L7/L12 stalk, and near the tRNA binding site of the peptidyltransferase center. The sequence is that of Large ribosomal subunit protein uL6 from Beijerinckia indica subsp. indica (strain ATCC 9039 / DSM 1715 / NCIMB 8712).